Here is a 640-residue protein sequence, read N- to C-terminus: MAALVSTVSSIIRWNSNNNNNNNFTRSVKSCLSSNYHNNNNIIHNKTVLMSTNNNNNNNQKNSSRRSANYQPPLWQFDYVQSLSSPFKDEAYVKRVEKLKEEVRVMVKRAREEEKPLSQLELIDVLQRLGISYHFEDEINDILKHIYNNNNVYNTNNNVYANSLEFRLLRQHGYPVSQEIFSTCKDERGNFMVCTNDIKGMLSLYEASFYLVENEDGILEETREKTKKYLEEYIIMIMEKQQSLLDQNNNNYDYDYDYELVSHALELPLHWRMLRLESRWFIDVYEKRLDMNPTLLTLAKLDFNIVQSIYQDDLKHVFSWWESTDMGKKLEFARDRTMVNFLWTVGVAFEPHFKSFRRMITKVNALITVIDDIYDVYGTLDELELFTNAVERWDISAMDGLPEYMKTCFLALYNFINDLPFDVLKGEEGLHIIKFLQKSWADLCKSYLREARWYYNGYTPSFEEYIENAWISISGPVILSHLYFFVVNPNKENALLSTCFDGYPTIIRHSSMILRLKDDMGTSTDELKRGDVPKSIQCKMYEDGISEEEARQRIKLLISETWKLINKDYINLDDDDDGGDDYSPMFYKSNNINKAFIEMCLNLGRMAHCIYQYGDGHGIQDRQTKDHVLSLLIHPIPLTQ.

A chloroplast-targeting transit peptide spans 1–95 (MAALVSTVSS…PFKDEAYVKR (95 aa)). Residues 50 to 69 (MSTNNNNNNNQKNSSRRSAN) are disordered. Positions 60–69 (QKNSSRRSAN) are enriched in polar residues. The (2E)-geranyl diphosphate site is built by Arg-334, Asp-371, Asp-375, Arg-515, and Asp-518. The Mg(2+) site is built by Asp-371 and Asp-375. A DDXXD motif motif is present at residues 371-375 (DDIYD). Mg(2+)-binding residues include Asp-518, Thr-522, and Glu-526.

The protein belongs to the terpene synthase family. As to quaternary structure, monomer. The cofactor is Mg(2+).

The protein resides in the plastid. Its subcellular location is the chloroplast. The catalysed reaction is (2E)-geranyl diphosphate = (Z)-beta-ocimene + diphosphate. It participates in secondary metabolite biosynthesis; terpenoid biosynthesis. In terms of biological role, involved in monoterpene (C10) olefins biosynthesis, constituants of cannabinoids and terpenoids-rich resins. Catalyzes mainly the conversion of (2E)-geranyl diphosphate to (Z)-beta-ocimene. In Cannabis sativa (Hemp), this protein is (Z)-beta-ocimene synthase TPS13PK, chloroplastic.